The following is a 258-amino-acid chain: Leucyl/phenylalanyl-tRNA--protein transferase (258 aa).

This sequence belongs to the L/F-transferase family.

Its subcellular location is the cytoplasm. The catalysed reaction is N-terminal L-lysyl-[protein] + L-leucyl-tRNA(Leu) = N-terminal L-leucyl-L-lysyl-[protein] + tRNA(Leu) + H(+). The enzyme catalyses N-terminal L-arginyl-[protein] + L-leucyl-tRNA(Leu) = N-terminal L-leucyl-L-arginyl-[protein] + tRNA(Leu) + H(+). It catalyses the reaction L-phenylalanyl-tRNA(Phe) + an N-terminal L-alpha-aminoacyl-[protein] = an N-terminal L-phenylalanyl-L-alpha-aminoacyl-[protein] + tRNA(Phe). Its function is as follows. Functions in the N-end rule pathway of protein degradation where it conjugates Leu, Phe and, less efficiently, Met from aminoacyl-tRNAs to the N-termini of proteins containing an N-terminal arginine or lysine. This is Leucyl/phenylalanyl-tRNA--protein transferase from Alkalilimnicola ehrlichii (strain ATCC BAA-1101 / DSM 17681 / MLHE-1).